The chain runs to 715 residues: Macrolide export ATP-binding/permease protein MacB (715 aa).

In terms of domain architecture, ABC transporter spans I4–K245. An ATP-binding site is contributed by G40–T47. Residues A229–M251 are disordered. A run of 4 helical transmembrane segments spans residues A277 to I297, L592 to M612, Q639 to G659, and I681 to W701.

The protein belongs to the ABC transporter superfamily. Macrolide exporter (TC 3.A.1.122) family. Homodimer.

It is found in the cell inner membrane. Non-canonical ABC transporter that contains transmembrane domains (TMD), which form a pore in the inner membrane, and an ATP-binding domain (NBD), which is responsible for energy generation. Confers resistance against macrolides. This Syntrophobacter fumaroxidans (strain DSM 10017 / MPOB) protein is Macrolide export ATP-binding/permease protein MacB.